A 297-amino-acid chain; its full sequence is 1D-myo-inositol 2-acetamido-2-deoxy-alpha-D-glucopyranoside deacetylase (297 aa).

Positions 11, 14, and 154 each coordinate Zn(2+).

This sequence belongs to the MshB deacetylase family. It depends on Zn(2+) as a cofactor.

The enzyme catalyses 1D-myo-inositol 2-acetamido-2-deoxy-alpha-D-glucopyranoside + H2O = 1D-myo-inositol 2-amino-2-deoxy-alpha-D-glucopyranoside + acetate. Catalyzes the deacetylation of 1D-myo-inositol 2-acetamido-2-deoxy-alpha-D-glucopyranoside (GlcNAc-Ins) in the mycothiol biosynthesis pathway. This Tsukamurella paurometabola (strain ATCC 8368 / DSM 20162 / CCUG 35730 / CIP 100753 / JCM 10117 / KCTC 9821 / NBRC 16120 / NCIMB 702349 / NCTC 13040) (Corynebacterium paurometabolum) protein is 1D-myo-inositol 2-acetamido-2-deoxy-alpha-D-glucopyranoside deacetylase.